Here is a 230-residue protein sequence, read N- to C-terminus: Ureidoacrylate amidohydrolase RutB (230 aa).

The Proton acceptor role is filled by aspartate 23. The active site involves lysine 132. The Nucleophile role is filled by cysteine 165.

This sequence belongs to the isochorismatase family. RutB subfamily.

The enzyme catalyses (Z)-3-ureidoacrylate + H2O + H(+) = (Z)-3-aminoacrylate + NH4(+) + CO2. It carries out the reaction (Z)-3-ureidoacrylate + H2O = (Z)-3-aminoacrylate + carbamate + H(+). It catalyses the reaction (Z)-2-methylureidoacrylate + H2O + H(+) = (Z)-2-methylaminoacrylate + NH4(+) + CO2. Functionally, hydrolyzes ureidoacrylate to form aminoacrylate and carbamate. The carbamate hydrolyzes spontaneously, thereby releasing one of the nitrogen atoms of the pyrimidine ring as ammonia and one of its carbon atoms as CO2. The protein is Ureidoacrylate amidohydrolase RutB of Yersinia enterocolitica serotype O:8 / biotype 1B (strain NCTC 13174 / 8081).